The sequence spans 241 residues: Pyridoxine 5'-phosphate synthase (241 aa).

Asn7 lines the 3-amino-2-oxopropyl phosphate pocket. 9–10 serves as a coordination point for 1-deoxy-D-xylulose 5-phosphate; sequence DH. Arg18 is a binding site for 3-amino-2-oxopropyl phosphate. His43 acts as the Proton acceptor in catalysis. 1-deoxy-D-xylulose 5-phosphate-binding residues include Arg45 and His50. Glu70 serves as the catalytic Proton acceptor. Thr100 contributes to the 1-deoxy-D-xylulose 5-phosphate binding site. Catalysis depends on His191, which acts as the Proton donor. 3-amino-2-oxopropyl phosphate contacts are provided by residues Ser192 and 213-214; that span reads GH.

The protein belongs to the PNP synthase family. In terms of assembly, homooctamer; tetramer of dimers.

The protein resides in the cytoplasm. The catalysed reaction is 3-amino-2-oxopropyl phosphate + 1-deoxy-D-xylulose 5-phosphate = pyridoxine 5'-phosphate + phosphate + 2 H2O + H(+). Its pathway is cofactor biosynthesis; pyridoxine 5'-phosphate biosynthesis; pyridoxine 5'-phosphate from D-erythrose 4-phosphate: step 5/5. In terms of biological role, catalyzes the complicated ring closure reaction between the two acyclic compounds 1-deoxy-D-xylulose-5-phosphate (DXP) and 3-amino-2-oxopropyl phosphate (1-amino-acetone-3-phosphate or AAP) to form pyridoxine 5'-phosphate (PNP) and inorganic phosphate. This Nitrosomonas eutropha (strain DSM 101675 / C91 / Nm57) protein is Pyridoxine 5'-phosphate synthase.